The primary structure comprises 119 residues: MTISYTFTRELRLLTPAQFKSVFSKPIKASSAEITLLAIPNTEQHPRIGLTVAKRFVKKAHQRNRIKRIIRDNFRLHQHELPAIDIVVLVRNGVVEMENAELHKLVEKLWRKLNRRYNG.

The protein belongs to the RnpA family. Consists of a catalytic RNA component (M1 or rnpB) and a protein subunit.

The catalysed reaction is Endonucleolytic cleavage of RNA, removing 5'-extranucleotides from tRNA precursor.. Its function is as follows. RNaseP catalyzes the removal of the 5'-leader sequence from pre-tRNA to produce the mature 5'-terminus. It can also cleave other RNA substrates such as 4.5S RNA. The protein component plays an auxiliary but essential role in vivo by binding to the 5'-leader sequence and broadening the substrate specificity of the ribozyme. The sequence is that of Ribonuclease P protein component from Shewanella woodyi (strain ATCC 51908 / MS32).